Here is a 428-residue protein sequence, read N- to C-terminus: Leucine-rich repeat-containing protein 42 (428 aa).

LRR repeat units follow at residues 149-170, 174-195, 202-222, 234-255, and 259-280; these read VLCSLCLRNRYLVISEKLEEIK, ELTCLDLSCCKLGDEHELLEHL, SVTQLRLKDNCLSDAGVRKMT, NLSLLDLSCNPEITDAGIGYLF, and KLNCLDISGTGLKDIKAVKHKL. Residues 379–412 form a disordered region; the sequence is KHEALSSQESKKSKKRAFEEPEKEQGSSSQTSKQ. The segment covering 394–403 has biased composition (basic and acidic residues); it reads RAFEEPEKEQ. Phosphoserine occurs at positions 406 and 407.

This sequence belongs to the LRRC42 family.

This is Leucine-rich repeat-containing protein 42 (LRRC42) from Bos taurus (Bovine).